Consider the following 289-residue polypeptide: Light-independent protochlorophyllide reductase iron-sulfur ATP-binding protein (289 aa).

ATP is bound by residues 10–15 and Lys39; that span reads GIGKST. Ser14 serves as a coordination point for Mg(2+). The [4Fe-4S] cluster site is built by Cys95 and Cys129. 180–181 contributes to the ATP binding site; it reads NR.

Belongs to the NifH/BchL/ChlL family. Homodimer. Protochlorophyllide reductase is composed of three subunits; ChlL, ChlN and ChlB. Requires [4Fe-4S] cluster as cofactor.

It is found in the plastid. The protein resides in the chloroplast. The catalysed reaction is chlorophyllide a + oxidized 2[4Fe-4S]-[ferredoxin] + 2 ADP + 2 phosphate = protochlorophyllide a + reduced 2[4Fe-4S]-[ferredoxin] + 2 ATP + 2 H2O. Its pathway is porphyrin-containing compound metabolism; chlorophyll biosynthesis (light-independent). Its function is as follows. Component of the dark-operative protochlorophyllide reductase (DPOR) that uses Mg-ATP and reduced ferredoxin to reduce ring D of protochlorophyllide (Pchlide) to form chlorophyllide a (Chlide). This reaction is light-independent. The L component serves as a unique electron donor to the NB-component of the complex, and binds Mg-ATP. The chain is Light-independent protochlorophyllide reductase iron-sulfur ATP-binding protein from Marchantia polymorpha (Common liverwort).